The following is a 131-amino-acid chain: Tegument protein ORF52 (131 aa).

The tract at residues 103–131 (SDGGTAKPPPGANNRRRRGASTTRAGVDD) is disordered. The segment covering 122 to 131 (ASTTRAGVDD) has biased composition (low complexity). S123 carries the phosphoserine; by host modification.

Belongs to the herpesviridae BLRF2 family. In terms of assembly, homooligomer; homooligomerizes and binds double-stranded DNA (dsDNA) cooperatively. Interacts with host CGAS. Interacts with PQBP1.

The protein localises to the host cytoplasm. It localises to the virion tegument. Its function is as follows. Plays a role in the inhibition of host innate immune system by targeting the CGAS enzymatic activity which is the principal cytosolic DNA sensor that detects invading viral DNA. Acts by inhibiting CGAS-DNA phase separation: directly binds double-stranded DNA (dsDNA) in a length dependent but sequence independent manner and is able to form DNA-induced phase separation in infected cells. DNA phase separation of ORF52 mediates disruption of liquid-like droplets in which CGAS is activated, thereby preventing CGAS activity. Targets also the HDP-RNP complex composed of DNA-PK subunits and paraspeckle proteins. This complex is a key nuclear regulator of DNA-mediated activation of innate immune response through the cGAS-STING pathway. The chain is Tegument protein ORF52 from Homo sapiens (Human).